We begin with the raw amino-acid sequence, 230 residues long: UPF0173 metal-dependent hydrolase Pden_0574 (230 aa).

This sequence belongs to the UPF0173 family.

The chain is UPF0173 metal-dependent hydrolase Pden_0574 from Paracoccus denitrificans (strain Pd 1222).